Consider the following 223-residue polypeptide: UPF0758 protein Tgr7_0100 (223 aa).

Residues 102–223 (ALTSPDDTRR…LVSFAERGLL (122 aa)) enclose the MPN domain. Zn(2+) is bound by residues His173, His175, and Asp186. The JAMM motif signature appears at 173 to 186 (HNHPSGVAEPSRSD).

The protein belongs to the UPF0758 family.

The polypeptide is UPF0758 protein Tgr7_0100 (Thioalkalivibrio sulfidiphilus (strain HL-EbGR7)).